A 658-amino-acid polypeptide reads, in one-letter code: Exoribonuclease 2 (658 aa).

Residues R189–L530 enclose the RNB domain. Positions A576–I658 constitute an S1 motif domain.

This sequence belongs to the RNR ribonuclease family. RNase II subfamily.

The protein localises to the cytoplasm. It carries out the reaction Exonucleolytic cleavage in the 3'- to 5'-direction to yield nucleoside 5'-phosphates.. In terms of biological role, involved in mRNA degradation. Hydrolyzes single-stranded polyribonucleotides processively in the 3' to 5' direction. This is Exoribonuclease 2 from Actinobacillus pleuropneumoniae serotype 5b (strain L20).